A 353-amino-acid chain; its full sequence is uncharacterized protein (353 aa).

The next 9 membrane-spanning stretches (helical) occupy residues 16 to 36, 77 to 97, 106 to 128, 140 to 160, 167 to 187, 208 to 228, 263 to 283, 296 to 316, and 323 to 343; these read AAYI…ISCG, VVLA…FQGL, YTLG…GLHL, SVAA…LVHA, LILT…LIIA, GWSY…LLII, LLTG…LVIP, HLLP…DLLS, and IELP…ALIL.

Belongs to the binding-protein-dependent transport system permease family. FecCD subfamily. The complex is composed of two ATP-binding proteins (YvrA), two transmembrane proteins (YvrB) and a solute-binding protein (YvrC).

The protein localises to the cell membrane. Probably part of an ABC transporter complex. Probably responsible for the translocation of the substrate across the membrane. This is an uncharacterized protein from Bacillus subtilis (strain 168).